The chain runs to 278 residues: Large ribosomal subunit protein uL2 (278 aa).

The tract at residues 222 to 278 is disordered; the sequence is GVVMNPIDHPHGGGEGRTSGGRHPVTPWGKPTKGKKTRSNKSTDKFILISRHKRKKK.

This sequence belongs to the universal ribosomal protein uL2 family. Part of the 50S ribosomal subunit. Forms a bridge to the 30S subunit in the 70S ribosome.

One of the primary rRNA binding proteins. Required for association of the 30S and 50S subunits to form the 70S ribosome, for tRNA binding and peptide bond formation. It has been suggested to have peptidyltransferase activity; this is somewhat controversial. Makes several contacts with the 16S rRNA in the 70S ribosome. The polypeptide is Large ribosomal subunit protein uL2 (Rhodopseudomonas palustris (strain ATCC BAA-98 / CGA009)).